The sequence spans 120 residues: Large ribosomal subunit protein eL34 (120 aa).

The protein belongs to the eukaryotic ribosomal protein eL34 family.

The sequence is that of Large ribosomal subunit protein eL34 (RPL34) from Nicotiana tabacum (Common tobacco).